We begin with the raw amino-acid sequence, 302 residues long: Serine/threonine-protein phosphatase alpha-3 isoform (302 aa).

The Mn(2+) site is built by Asp-62, His-64, Asp-90, and Asn-122. His-123 acts as the Proton donor in catalysis. Mn(2+) is bound by residues His-171 and His-246.

The protein belongs to the PPP phosphatase family. PP-1 subfamily. As to quaternary structure, interacts with Nop17l. Mn(2+) is required as a cofactor.

The enzyme catalyses O-phospho-L-seryl-[protein] + H2O = L-seryl-[protein] + phosphate. It carries out the reaction O-phospho-L-threonyl-[protein] + H2O = L-threonyl-[protein] + phosphate. The chain is Serine/threonine-protein phosphatase alpha-3 isoform (Pp1-13C) from Drosophila melanogaster (Fruit fly).